The sequence spans 258 residues: Putative L-lactate dehydrogenase operon regulatory protein (258 aa).

One can recognise an HTH gntR-type domain in the interval 6–74 (RRLSDEVADR…RGGGTFIRWR (69 aa)). Residues 34 to 53 (ERQLAMQLGVSRNSLREALA) constitute a DNA-binding region (H-T-H motif).

In terms of biological role, may be a regulatory protein for the LCT genes. In Escherichia coli (strain K12), this protein is Putative L-lactate dehydrogenase operon regulatory protein (lldR).